The primary structure comprises 168 residues: ATP synthase subunit d, mitochondrial (168 aa).

It belongs to the ATPase d subunit family. In terms of assembly, F-type ATPases have 2 components, CF(1) - the catalytic core - and CF(0) - the membrane proton channel. CF(0) seems to have nine subunits: a, b, c, d, e, f, g, F6 and 8 (or A6L).

The protein resides in the mitochondrion. Its subcellular location is the mitochondrion inner membrane. Mitochondrial membrane ATP synthase (F(1)F(0) ATP synthase or Complex V) produces ATP from ADP in the presence of a proton gradient across the membrane which is generated by electron transport complexes of the respiratory chain. F-type ATPases consist of two structural domains, F(1) - containing the extramembraneous catalytic core, and F(0) - containing the membrane proton channel, linked together by a central stalk and a peripheral stalk. During catalysis, ATP synthesis in the catalytic domain of F(1) is coupled via a rotary mechanism of the central stalk subunits to proton translocation. Part of the complex F(0) domain and the peripheric stalk, which acts as a stator to hold the catalytic alpha(3)beta(3) subcomplex and subunit a/ATP6 static relative to the rotary elements. The sequence is that of ATP synthase subunit d, mitochondrial from Arabidopsis thaliana (Mouse-ear cress).